We begin with the raw amino-acid sequence, 474 residues long: tRNA-2-methylthio-N(6)-dimethylallyladenosine synthase (474 aa).

Positions 3 to 120 constitute an MTTase N-terminal domain; that stretch reads QKLHIKTWGC…LPEMINQIRG (118 aa). Residues Cys12, Cys49, Cys83, Cys157, Cys161, and Cys164 each coordinate [4Fe-4S] cluster. A Radical SAM core domain is found at 143–375; it reads RAEGPTAFVS…QQRINNQAAQ (233 aa). The 64-residue stretch at 378–441 folds into the TRAM domain; the sequence is RAMLGTEQRV…TNSLRGEVVR (64 aa).

Belongs to the methylthiotransferase family. MiaB subfamily. Monomer. It depends on [4Fe-4S] cluster as a cofactor.

The protein localises to the cytoplasm. It catalyses the reaction N(6)-dimethylallyladenosine(37) in tRNA + (sulfur carrier)-SH + AH2 + 2 S-adenosyl-L-methionine = 2-methylsulfanyl-N(6)-dimethylallyladenosine(37) in tRNA + (sulfur carrier)-H + 5'-deoxyadenosine + L-methionine + A + S-adenosyl-L-homocysteine + 2 H(+). Catalyzes the methylthiolation of N6-(dimethylallyl)adenosine (i(6)A), leading to the formation of 2-methylthio-N6-(dimethylallyl)adenosine (ms(2)i(6)A) at position 37 in tRNAs that read codons beginning with uridine. The sequence is that of tRNA-2-methylthio-N(6)-dimethylallyladenosine synthase from Pasteurella multocida (strain Pm70).